We begin with the raw amino-acid sequence, 119 residues long: Small ribosomal subunit protein bS16 (119 aa).

The protein belongs to the bacterial ribosomal protein bS16 family.

The polypeptide is Small ribosomal subunit protein bS16 (Chlamydia caviae (strain ATCC VR-813 / DSM 19441 / 03DC25 / GPIC) (Chlamydophila caviae)).